The following is a 336-amino-acid chain: Ferredoxin--NADP reductase 1 (336 aa).

7 residues coordinate FAD: Glu-37, Lys-45, Phe-50, Val-90, Leu-125, Asp-287, and Thr-328.

The protein belongs to the ferredoxin--NADP reductase type 2 family. Homodimer. It depends on FAD as a cofactor.

The catalysed reaction is 2 reduced [2Fe-2S]-[ferredoxin] + NADP(+) + H(+) = 2 oxidized [2Fe-2S]-[ferredoxin] + NADPH. The chain is Ferredoxin--NADP reductase 1 (ycgT) from Bacillus subtilis (strain 168).